The sequence spans 101 residues: Ubiquitin-related modifier 1 homolog (101 aa).

1-thioglycine is present on glycine 101. Glycine 101 participates in a covalent cross-link: Glycyl lysine isopeptide (Gly-Lys) (interchain with K-? in acceptor proteins).

Belongs to the URM1 family. As to quaternary structure, interacts with cer. Post-translationally, C-terminal thiocarboxylation occurs in 2 steps, it is first acyl-adenylated (-COAMP) via the hesA/moeB/thiF part of the MOCS3 homolog, then thiocarboxylated (-COSH) via the rhodanese domain of the MOCS3 homolog.

The protein localises to the cytoplasm. It functions in the pathway tRNA modification; 5-methoxycarbonylmethyl-2-thiouridine-tRNA biosynthesis. In terms of biological role, acts as a sulfur carrier required for 2-thiolation of mcm(5)S(2)U at tRNA wobble positions of cytosolic tRNA(Lys), tRNA(Glu) and tRNA(Gln). Serves as sulfur donor in tRNA 2-thiolation reaction by being thiocarboxylated (-COSH) at its C-terminus by MOCS3. The sulfur is then transferred to tRNA to form 2-thiolation of mcm(5)S(2)U. Also acts as a ubiquitin-like protein (UBL) that is covalently conjugated via an isopeptide bond to lysine residues of target proteins such as Prx2/Jafrac1, Ciao1, Eip71CD and GILT1. The thiocarboxylated form serves as substrate for conjugation and oxidative stress specifically induces the formation of UBL-protein conjugates. This chain is Ubiquitin-related modifier 1 homolog, found in Drosophila simulans (Fruit fly).